We begin with the raw amino-acid sequence, 134 residues long: uncharacterized protein (134 aa).

This is an uncharacterized protein from Acanthamoeba polyphaga (Amoeba).